The primary structure comprises 129 residues: UPF0225 protein XC_4246 (129 aa).

This sequence belongs to the UPF0225 family.

The sequence is that of UPF0225 protein XC_4246 from Xanthomonas campestris pv. campestris (strain 8004).